Consider the following 1479-residue polypeptide: Chromosome partition protein MukB (1479 aa).

34–41 is a binding site for ATP; it reads GGNGAGKS. Coiled-coil stretches lie at residues 138-163 and 331-664; these read ETLN…MEGV and QAAS…RLSQ. The interval 665 to 782 is flexible hinge; sequence PGGSEDPRLN…ALPLFGRAAR (118 aa). Coiled-coil stretches lie at residues 831-1112 and 1206-1257; these read DDPE…TAKA and VEAI…MLNQ.

The protein belongs to the SMC family. MukB subfamily. As to quaternary structure, homodimerization via its hinge domain. Binds to DNA via its C-terminal region. Interacts, and probably forms a ternary complex, with MukE and MukF via its C-terminal region. The complex formation is stimulated by calcium or magnesium. Interacts with tubulin-related protein FtsZ.

The protein resides in the cytoplasm. It localises to the nucleoid. In terms of biological role, plays a central role in chromosome condensation, segregation and cell cycle progression. Functions as a homodimer, which is essential for chromosome partition. Involved in negative DNA supercoiling in vivo, and by this means organize and compact chromosomes. May achieve or facilitate chromosome segregation by condensation DNA from both sides of a centrally located replisome during cell division. The chain is Chromosome partition protein MukB from Klebsiella pneumoniae.